Reading from the N-terminus, the 371-residue chain is Histidinol-phosphate aminotransferase 2 (371 aa).

Residue lysine 232 is modified to N6-(pyridoxal phosphate)lysine.

It belongs to the class-II pyridoxal-phosphate-dependent aminotransferase family. Histidinol-phosphate aminotransferase subfamily. As to quaternary structure, homodimer. Pyridoxal 5'-phosphate is required as a cofactor.

The catalysed reaction is L-histidinol phosphate + 2-oxoglutarate = 3-(imidazol-4-yl)-2-oxopropyl phosphate + L-glutamate. Its pathway is amino-acid biosynthesis; L-histidine biosynthesis; L-histidine from 5-phospho-alpha-D-ribose 1-diphosphate: step 7/9. The sequence is that of Histidinol-phosphate aminotransferase 2 from Methylococcus capsulatus (strain ATCC 33009 / NCIMB 11132 / Bath).